The chain runs to 511 residues: 2,3-bisphosphoglycerate-independent phosphoglycerate mutase (511 aa).

Mn(2+) is bound by residues aspartate 18 and serine 68. Serine 68 (phosphoserine intermediate) is an active-site residue. Substrate-binding positions include histidine 129, 159–160 (RD), arginine 191, lysine 197, 261–264 (RSDR), and lysine 329. Positions 396, 400, 437, 438, and 459 each coordinate Mn(2+). A disordered region spans residues 442–464 (ERMTKQAPDGSVRPYGGHTTNPV).

The protein belongs to the BPG-independent phosphoglycerate mutase family. Monomer. It depends on Mn(2+) as a cofactor.

The enzyme catalyses (2R)-2-phosphoglycerate = (2R)-3-phosphoglycerate. It participates in carbohydrate degradation; glycolysis; pyruvate from D-glyceraldehyde 3-phosphate: step 3/5. Functionally, catalyzes the interconversion of 2-phosphoglycerate and 3-phosphoglycerate. The protein is 2,3-bisphosphoglycerate-independent phosphoglycerate mutase of Streptomyces coelicolor (strain ATCC BAA-471 / A3(2) / M145).